The following is a 230-amino-acid chain: Claudin-2 (230 aa).

Over 1–7 the chain is Cytoplasmic; that stretch reads MASLGLQ. Residues 8 to 28 traverse the membrane as a helical segment; that stretch reads LVGYVLGLLGLLGTVIAMLLP. The Extracellular portion of the chain corresponds to 29 to 81; that stretch reads SWRTSSYVGASIVTAVGFSKGLWMECATHSTGITQCDIYSTMLGLPADIQAAQ. Residues Cys54 and Cys64 are joined by a disulfide bond. Residues 82–102 traverse the membrane as a helical segment; it reads AMMVTSSAMSSLACIVSVVGM. Residues 103-116 are Cytoplasmic-facing; sequence RCTVFFQESRAKDR. The helical transmembrane segment at 117–137 threads the bilayer; sequence VAVVGGVFFILGGLLGFIPVA. The Extracellular segment spans residues 138–162; it reads WNLHGILRDFYSPLVPDSMKFEIGE. Residues 163–183 traverse the membrane as a helical segment; it reads ALYLGIISSLFSLIAGIFLCF. The Cytoplasmic segment spans residues 184–230; it reads SCSPQGNRSNYYDAYQAQPLATRSSPRPGQAPKGKSEFNSYSLTGYV. Positions 205 to 230 are disordered; it reads TRSSPRPGQAPKGKSEFNSYSLTGYV. A Glycyl lysine isopeptide (Lys-Gly) (interchain with G-Cter in SUMO) cross-link involves residue Lys218. A phosphoserine mark is found at Ser219 and Ser223. The segment covering 220 to 230 has biased composition (polar residues); it reads EFNSYSLTGYV. The interval 229–230 is interaction with TJP1, TJP2 and TJP3; it reads YV.

This sequence belongs to the claudin family. In terms of assembly, can form homo- and heteropolymers with other claudins to mediate paracellular barrier and channel functions of tight junctions in response to physiological stimuli. Homopolymers interact with CLDN3, but not CLDN1, homopolymers. Directly interacts with TJP1/ZO-1, TJP2/ZO-2 and TJP3/ZO-3. The disulfide bond is necessary for pore formation, but is not required for correct protein trafficking.

The protein resides in the cell junction. It localises to the tight junction. The protein localises to the cell membrane. It carries out the reaction Na(+)(in) = Na(+)(out). The enzyme catalyses K(+)(in) = K(+)(out). It catalyses the reaction Rb(+)(in) = Rb(+)(out). The catalysed reaction is Li(+)(in) = Li(+)(out). It carries out the reaction Cs(+)(in) = Cs(+)(out). The enzyme catalyses Ca(2+)(in) = Ca(2+)(out). It catalyses the reaction methylamine(out) = methylamine(in). The catalysed reaction is choline(out) = choline(in). It carries out the reaction H2O(in) = H2O(out). Functionally, forms paracellular channels: polymerizes in tight junction strands with cation- and water-selective channels through the strands, conveying epithelial permeability in a process known as paracellular tight junction permeability. In intestinal epithelium, allows for sodium and water fluxes from the peritoneal side to the lumen of the intestine to regulate nutrient absorption and clear enteric pathogens as part of mucosal immune response. In kidney, allows passive sodium and calcium reabsorption across proximal tubules from the lumen back to the bloodstream. In the hepatobiliary tract, allows paracellular water and cation fluxes in the hepatic perivenous areas and biliary epithelium to generate bile flow and maintain osmotic gradients. This Bos taurus (Bovine) protein is Claudin-2 (CLDN2).